The primary structure comprises 88 residues: ATP synthase F(0) complex subunit f, mitochondrial (88 aa).

Alanine 2 carries the N-acetylalanine modification. Serine 3 carries the phosphoserine modification. N6-acetyllysine is present on lysine 16. A helical membrane pass occupies residues 62–79 (MVLAAYVVFSYCISYKEL).

The protein belongs to the ATPase F chain family. As to quaternary structure, component of the ATP synthase complex composed at least of ATP5F1A/subunit alpha, ATP5F1B/subunit beta, ATP5MC1/subunit c (homooctomer), MT-ATP6/subunit a, MT-ATP8/subunit 8, ATP5ME/subunit e, ATP5MF/subunit f, ATP5MG/subunit g, ATP5MK/subunit k, ATP5MJ/subunit j, ATP5F1C/subunit gamma, ATP5F1D/subunit delta, ATP5F1E/subunit epsilon, ATP5PF/subunit F6, ATP5PB/subunit b, ATP5PD/subunit d, ATP5PO/subunit OSCP. ATP synthase complex consists of a soluble F(1) head domain (subunits alpha(3) and beta(3)) - the catalytic core - and a membrane F(0) domain - the membrane proton channel (subunits c, a, 8, e, f, g, k and j). These two domains are linked by a central stalk (subunits gamma, delta, and epsilon) rotating inside the F1 region and a stationary peripheral stalk (subunits F6, b, d, and OSCP).

The protein resides in the mitochondrion. It localises to the mitochondrion inner membrane. Functionally, subunit f, of the mitochondrial membrane ATP synthase complex (F(1)F(0) ATP synthase or Complex V) that produces ATP from ADP in the presence of a proton gradient across the membrane which is generated by electron transport complexes of the respiratory chain. ATP synthase complex consist of a soluble F(1) head domain - the catalytic core - and a membrane F(1) domain - the membrane proton channel. These two domains are linked by a central stalk rotating inside the F(1) region and a stationary peripheral stalk. During catalysis, ATP synthesis in the catalytic domain of F(1) is coupled via a rotary mechanism of the central stalk subunits to proton translocation. In vivo, can only synthesize ATP although its ATP hydrolase activity can be activated artificially in vitro. Part of the complex F(0) domain. In Rattus norvegicus (Rat), this protein is ATP synthase F(0) complex subunit f, mitochondrial.